We begin with the raw amino-acid sequence, 283 residues long: Elongation factor Ts (283 aa).

The tract at residues 80-83 (TDFV) is involved in Mg(2+) ion dislocation from EF-Tu.

This sequence belongs to the EF-Ts family.

It localises to the cytoplasm. Its function is as follows. Associates with the EF-Tu.GDP complex and induces the exchange of GDP to GTP. It remains bound to the aminoacyl-tRNA.EF-Tu.GTP complex up to the GTP hydrolysis stage on the ribosome. In Haemophilus influenzae (strain 86-028NP), this protein is Elongation factor Ts.